Consider the following 118-residue polypeptide: Fluoride-specific ion channel FluC 1 (118 aa).

2 helical membrane passes run 5 to 25 (FLLVGFGAALGAMLRYGISVL) and 47 to 67 (FLLGFLVSSALGPVWQLFLGT). Residues glycine 71 and threonine 74 each contribute to the Na(+) site. Residues 98 to 118 (YLGFTYVFGLIAAFLGMMLGV) form a helical membrane-spanning segment.

Belongs to the fluoride channel Fluc/FEX (TC 1.A.43) family.

It is found in the cell membrane. It catalyses the reaction fluoride(in) = fluoride(out). Na(+) is not transported, but it plays an essential structural role and its presence is essential for fluoride channel function. In terms of biological role, fluoride-specific ion channel. Important for reducing fluoride concentration in the cell, thus reducing its toxicity. In Listeria monocytogenes serovar 1/2a (strain ATCC BAA-679 / EGD-e), this protein is Fluoride-specific ion channel FluC 1.